The sequence spans 493 residues: Cyclin-dependent kinase-like 2 (493 aa).

The Protein kinase domain occupies 4–287 (YENLGLVGEG…CAELLHHDFF (284 aa)). ATP-binding positions include 10–18 (VGEGSYGMV) and Lys-33. The short motif at 45-51 (KKIAMRE) is the [NKR]KIAxRE element. Asp-126 functions as the Proton acceptor in the catalytic mechanism. 2 disordered regions span residues 311 to 338 (VSLS…KTLV) and 363 to 384 (GEKA…SRTS). The segment covering 320–336 (RKKEKEKDDSLGEERKT) has biased composition (basic and acidic residues).

The protein belongs to the protein kinase superfamily. CMGC Ser/Thr protein kinase family. CDC2/CDKX subfamily.

It is found in the cytoplasm. The protein resides in the nucleus. It catalyses the reaction L-seryl-[protein] + ATP = O-phospho-L-seryl-[protein] + ADP + H(+). The catalysed reaction is L-threonyl-[protein] + ATP = O-phospho-L-threonyl-[protein] + ADP + H(+). This chain is Cyclin-dependent kinase-like 2, found in Pongo abelii (Sumatran orangutan).